Here is a 242-residue protein sequence, read N- to C-terminus: DnaJ homolog subfamily B member 3 (242 aa).

Positions 1–69 (MANYYEVLGV…KKRDVYDRYG (69 aa)) constitute a J domain.

In terms of tissue distribution, testis specific.

Functionally, may operate as a co-chaperone of the male germ cell- and haploid stage-specific Hsp70 proteins. The polypeptide is DnaJ homolog subfamily B member 3 (DNAJB3) (Macaca fuscata fuscata (Japanese macaque)).